The following is a 521-amino-acid chain: Probable cytochrome P450 12d1 proximal, mitochondrial (521 aa).

The N-terminal 19 residues, 1-19 (MNTLSSARSVAIYVGPVRS), are a transit peptide targeting the mitochondrion. Residue Cys467 coordinates heme.

It belongs to the cytochrome P450 family. It depends on heme as a cofactor.

Its subcellular location is the mitochondrion membrane. This is Probable cytochrome P450 12d1 proximal, mitochondrial (Cyp12d1-p) from Drosophila melanogaster (Fruit fly).